Here is a 319-residue protein sequence, read N- to C-terminus: Malate dehydrogenase (319 aa).

NAD(+)-binding positions include 10–15 (GAGQIG) and Asp34. The substrate site is built by Arg85 and Arg91. NAD(+) is bound by residues Asn98 and 121–123 (ITN). Substrate contacts are provided by Asn123 and Arg154. His178 acts as the Proton acceptor in catalysis.

Belongs to the LDH/MDH superfamily. MDH type 3 family.

It catalyses the reaction (S)-malate + NAD(+) = oxaloacetate + NADH + H(+). Catalyzes the reversible oxidation of malate to oxaloacetate. This chain is Malate dehydrogenase, found in Rhodospirillum centenum (strain ATCC 51521 / SW).